The chain runs to 628 residues: Nuclear RNA export factor 1 (628 aa).

The interval 47–83 (DTQSRYEDDDEPAVPVRASLTSASSRGRGGSSRGFGQ) is disordered. The segment covering 63-72 (RASLTSASSR) has biased composition (low complexity). Positions 100–179 (YKCRATGAAK…EFYTSKVPAP (80 aa)) constitute an RRM domain. LRR repeat units follow at residues 245 to 270 (NIVA…SIAK) and 271 to 294 (FVME…FAGL). The 162-residue stretch at 365 to 526 (LVEQFVTSYF…VAVISDQLFI (162 aa)) folds into the NTF2 domain. In terms of domain architecture, TAP-C spans 576–628 (PIREEMIKAMCQFSGMIPPFSEKCLADCAWNFDFACQKFNEIKSSVPAEAFAH).

This sequence belongs to the NXF family. In terms of assembly, interacts with nucleoporins, Nup98, Nup153 and Nup214.

It localises to the nucleus. Its function is as follows. Involved in RNA export from the nucleus to the cytoplasm. This is Nuclear RNA export factor 1 (nxf-1) from Caenorhabditis elegans.